A 327-amino-acid polypeptide reads, in one-letter code: Interleukin-12 subunit beta (327 aa).

Residues 1–22 (MHPQQLVVSWFSLVLLASPIVA) form the signal peptide. Positions 23–106 (IWELEKNVYI…LSRSLLLLHK (84 aa)) constitute an Ig-like C2-type domain. A disulfide bridge links Cys-50 with Cys-90. Asn-223 is a glycosylation site (N-linked (GlcNAc...) asparagine). The Fibronectin type-III domain occupies 238–327 (PPKNLQLRPL…WSEWASVSCS (90 aa)).

It belongs to the IL-12B family. In terms of assembly, heterodimer with IL12A; disulfide-linked. The heterodimer is known as interleukin IL-12. Heterodimer with IL23A; disulfide-linked. The heterodimer is known as interleukin IL-23. Also secreted as a monomer. Interacts with NBR1; this interaction promotes IL-12 secretion.

It localises to the secreted. In terms of biological role, cytokine that can act as a growth factor for activated T and NK cells, enhance the lytic activity of NK/lymphokine-activated killer cells, and stimulate the production of IFN-gamma by resting PBMC. The sequence is that of Interleukin-12 subunit beta (IL12B) from Bubalus carabanensis (Swamp type water buffalo).